The chain runs to 200 residues: MQLNVNDAQAIEVSELTFGGEFNETLVHQAVVAYMAGGRQGSKQQKTRSDVSGGGKRPWRQKGTGRARAGTIRSPIWRGGGTTFAARPQDHSQKLNKKMYRAAMRSILAELVRTDRLVVVQDFAVETPKTKDLLGKLNNMSLTDVLIVSDAVDQNLYLAARNLPHVDVRDVQGSDPVSLIAYDKVLITVSAVKKFEELLG.

The segment at 38 to 72 (GRQGSKQQKTRSDVSGGGKRPWRQKGTGRARAGTI) is disordered.

It belongs to the universal ribosomal protein uL4 family. Part of the 50S ribosomal subunit.

In terms of biological role, one of the primary rRNA binding proteins, this protein initially binds near the 5'-end of the 23S rRNA. It is important during the early stages of 50S assembly. It makes multiple contacts with different domains of the 23S rRNA in the assembled 50S subunit and ribosome. Its function is as follows. Forms part of the polypeptide exit tunnel. The chain is Large ribosomal subunit protein uL4 from Pseudomonas fluorescens (strain ATCC BAA-477 / NRRL B-23932 / Pf-5).